A 277-amino-acid chain; its full sequence is Tryptophan synthase alpha chain (277 aa).

Catalysis depends on proton acceptor residues Glu-50 and Asp-61.

This sequence belongs to the TrpA family. Tetramer of two alpha and two beta chains.

The enzyme catalyses (1S,2R)-1-C-(indol-3-yl)glycerol 3-phosphate + L-serine = D-glyceraldehyde 3-phosphate + L-tryptophan + H2O. The protein operates within amino-acid biosynthesis; L-tryptophan biosynthesis; L-tryptophan from chorismate: step 5/5. In terms of biological role, the alpha subunit is responsible for the aldol cleavage of indoleglycerol phosphate to indole and glyceraldehyde 3-phosphate. This is Tryptophan synthase alpha chain from Beijerinckia indica subsp. indica (strain ATCC 9039 / DSM 1715 / NCIMB 8712).